We begin with the raw amino-acid sequence, 512 residues long: ADP,ATP carrier protein 4 (512 aa).

The next 12 membrane-spanning stretches (helical) occupy residues isoleucine 34–isoleucine 54, isoleucine 71–valine 91, isoleucine 102–phenylalanine 122, phenylalanine 157–tryptophan 177, phenylalanine 192–glutamate 212, phenylalanine 231–isoleucine 251, leucine 296–lysine 316, alanine 330–leucine 350, phenylalanine 361–phenylalanine 381, leucine 390–isoleucine 410, valine 448–isoleucine 468, and serine 476–threonine 496.

The protein belongs to the ADP/ATP translocase tlc family.

The protein resides in the cell membrane. Its function is as follows. Provides the rickettsial cell with host ATP in exchange for rickettsial ADP. This is an obligate exchange system. This energy acquiring activity is an important component of rickettsial parasitism. This is ADP,ATP carrier protein 4 (tlcD) from Rickettsia typhi (strain ATCC VR-144 / Wilmington).